The sequence spans 174 residues: Inactive signal peptidase IA (174 aa).

Residues 1 to 7 are Cytoplasmic-facing; that stretch reads MKKVVKY. Residues 8–28 form a helical membrane-spanning segment; sequence LISLILAIIIVLFVQTFVIVG. The Extracellular portion of the chain corresponds to 29–174; the sequence is HVIPNNDMSP…FSKWTIQFKS (146 aa).

This sequence belongs to the peptidase S26 family.

It is found in the cell membrane. Functionally, catalytically inactive. The protein is Inactive signal peptidase IA (spsA) of Staphylococcus aureus (strain MRSA252).